Reading from the N-terminus, the 78-residue chain is Large ribosomal subunit protein bL28 (78 aa).

It belongs to the bacterial ribosomal protein bL28 family.

This chain is Large ribosomal subunit protein bL28, found in Pasteurella multocida (strain Pm70).